A 442-amino-acid chain; its full sequence is Trigger factor (442 aa).

Residues 165–250 (DDRVIIDFEG…LQKVMAPELP (86 aa)) enclose the PPIase FKBP-type domain.

The protein belongs to the FKBP-type PPIase family. Tig subfamily.

It is found in the cytoplasm. The catalysed reaction is [protein]-peptidylproline (omega=180) = [protein]-peptidylproline (omega=0). In terms of biological role, involved in protein export. Acts as a chaperone by maintaining the newly synthesized protein in an open conformation. Functions as a peptidyl-prolyl cis-trans isomerase. This chain is Trigger factor, found in Coxiella burnetii (strain RSA 493 / Nine Mile phase I).